The chain runs to 433 residues: Glutamate-1-semialdehyde 2,1-aminomutase (433 aa).

Lys-271 carries the N6-(pyridoxal phosphate)lysine modification.

Belongs to the class-III pyridoxal-phosphate-dependent aminotransferase family. HemL subfamily. As to quaternary structure, homodimer. Pyridoxal 5'-phosphate serves as cofactor.

It localises to the cytoplasm. It carries out the reaction (S)-4-amino-5-oxopentanoate = 5-aminolevulinate. It functions in the pathway porphyrin-containing compound metabolism; protoporphyrin-IX biosynthesis; 5-aminolevulinate from L-glutamyl-tRNA(Glu): step 2/2. It participates in porphyrin-containing compound metabolism; chlorophyll biosynthesis. This chain is Glutamate-1-semialdehyde 2,1-aminomutase, found in Prochlorococcus marinus (strain AS9601).